Here is a 240-residue protein sequence, read N- to C-terminus: UDP-2,3-diacylglucosamine hydrolase (240 aa).

Mn(2+) contacts are provided by Asp-8, His-10, Asp-41, Asn-79, and His-114. Residue 79-80 (NR) coordinates substrate. 5 residues coordinate substrate: Asp-122, Ser-160, Asn-164, Lys-167, and His-195. His-195 and His-197 together coordinate Mn(2+).

The protein belongs to the LpxH family. Mn(2+) is required as a cofactor.

The protein resides in the cell inner membrane. It carries out the reaction UDP-2-N,3-O-bis[(3R)-3-hydroxytetradecanoyl]-alpha-D-glucosamine + H2O = 2-N,3-O-bis[(3R)-3-hydroxytetradecanoyl]-alpha-D-glucosaminyl 1-phosphate + UMP + 2 H(+). It participates in glycolipid biosynthesis; lipid IV(A) biosynthesis; lipid IV(A) from (3R)-3-hydroxytetradecanoyl-[acyl-carrier-protein] and UDP-N-acetyl-alpha-D-glucosamine: step 4/6. Its function is as follows. Hydrolyzes the pyrophosphate bond of UDP-2,3-diacylglucosamine to yield 2,3-diacylglucosamine 1-phosphate (lipid X) and UMP by catalyzing the attack of water at the alpha-P atom. Involved in the biosynthesis of lipid A, a phosphorylated glycolipid that anchors the lipopolysaccharide to the outer membrane of the cell. This chain is UDP-2,3-diacylglucosamine hydrolase, found in Pectobacterium atrosepticum (strain SCRI 1043 / ATCC BAA-672) (Erwinia carotovora subsp. atroseptica).